The chain runs to 118 residues: Small ribosomal subunit protein uS13 (118 aa).

The disordered stretch occupies residues 94–118 (GLPLRGQRTKTNARTRKGPRKPIKK).

This sequence belongs to the universal ribosomal protein uS13 family. Part of the 30S ribosomal subunit. Forms a loose heterodimer with protein S19. Forms two bridges to the 50S subunit in the 70S ribosome.

Located at the top of the head of the 30S subunit, it contacts several helices of the 16S rRNA. In the 70S ribosome it contacts the 23S rRNA (bridge B1a) and protein L5 of the 50S subunit (bridge B1b), connecting the 2 subunits; these bridges are implicated in subunit movement. Contacts the tRNAs in the A and P-sites. The chain is Small ribosomal subunit protein uS13 from Cellvibrio japonicus (strain Ueda107) (Pseudomonas fluorescens subsp. cellulosa).